Here is a 130-residue protein sequence, read N- to C-terminus: Transcription antitermination protein NusB (130 aa).

It belongs to the NusB family.

Functionally, involved in transcription antitermination. Required for transcription of ribosomal RNA (rRNA) genes. Binds specifically to the boxA antiterminator sequence of the ribosomal RNA (rrn) operons. This chain is Transcription antitermination protein NusB, found in Bacillus mycoides (strain KBAB4) (Bacillus weihenstephanensis).